A 310-amino-acid chain; its full sequence is Alpha/beta hydrolase domain-containing protein 17A (310 aa).

Catalysis depends on charge relay system residues S190, D255, and H284. S307 bears the Phosphoserine mark.

The protein belongs to the AB hydrolase superfamily. ABHD17 family. Post-translationally, palmitoylated on cysteine residues located in a cysteine cluster at the N-terminus which promotes membrane localization. Palmitoylation is required for post-synaptic localization and for depalmitoylating activity towards DLG4/PSD95.

The protein localises to the cell membrane. The protein resides in the endosome membrane. Its subcellular location is the cell projection. It is found in the dendritic spine. It localises to the postsynaptic density membrane. It carries out the reaction S-hexadecanoyl-L-cysteinyl-[protein] + H2O = L-cysteinyl-[protein] + hexadecanoate + H(+). Inhibited by palmostatin-B. Its function is as follows. Hydrolyzes fatty acids from S-acylated cysteine residues in proteins. Has depalmitoylating activity towards NRAS. Has depalmitoylating activity towards DLG4/PSD95. May have depalmitoylating activity towards MAP6. The chain is Alpha/beta hydrolase domain-containing protein 17A from Homo sapiens (Human).